Reading from the N-terminus, the 264-residue chain is Triosephosphate isomerase (264 aa).

Position 13–15 (13–15 (NWK)) interacts with substrate. His-106 serves as the catalytic Electrophile. The Proton acceptor role is filled by Glu-179. Residues Gly-185, Ser-223, and 244–245 (GG) each bind substrate.

The protein belongs to the triosephosphate isomerase family. Homodimer.

The protein resides in the cytoplasm. It catalyses the reaction D-glyceraldehyde 3-phosphate = dihydroxyacetone phosphate. It functions in the pathway carbohydrate biosynthesis; gluconeogenesis. It participates in carbohydrate degradation; glycolysis; D-glyceraldehyde 3-phosphate from glycerone phosphate: step 1/1. Functionally, involved in the gluconeogenesis. Catalyzes stereospecifically the conversion of dihydroxyacetone phosphate (DHAP) to D-glyceraldehyde-3-phosphate (G3P). This Acinetobacter baumannii (strain SDF) protein is Triosephosphate isomerase.